A 4621-amino-acid chain; its full sequence is Dynein axonemal heavy chain 5 (4621 aa).

Residues 1 to 1938 (MFRIGRRQLW…MIHITDVAFI (1938 aa)) are stem. Coiled-coil stretches lie at residues 260–305 (WIKQ…DQLK) and 803–825 (LENAFAKIKDLELLLDRVNDLIE). The disordered stretch occupies residues 901-921 (VCHENASPSGNTSGRREGHSE). 2 coiled-coil regions span residues 1065 to 1094 (AVKNNEDSDSDAEVEENELQETLEIASINL) and 1433 to 1462 (DVNIEKINNELLEFQNRCRKLPRALKDWQA). AAA stretches follow at residues 1939 to 2161 (YQNE…VLRT), 2221 to 2440 (TAIS…IQNL), 2547 to 2800 (VYPP…IWQG), and 2913 to 3167 (LYNE…FRRS). ATP is bound by residues 1977-1984 (GPAGTGKT) and 2259-2266 (GPSGSGKT). The interval 3182 to 3479 (YKFIYEEKHM…QTLLEDADRC (298 aa)) is stalk. Coiled-coil stretches lie at residues 3186–3299 (YEEK…QTIK), 3423–3490 (LKAN…STLI), and 3729–3814 (ILTE…EEYR). AAA regions lie at residues 3564–3794 (LIDA…EVTQ) and 4009–4223 (ARKY…FIQN). Residues 4389–4417 (FLRQEIDRMQRVLSLVRSTLTELKLAVDG) adopt a coiled-coil conformation.

The protein belongs to the dynein heavy chain family. In terms of assembly, interacts with DNAL1. Consists of at least two heavy chains and a number of intermediate and light chains. Strongly expressed in lung and kidney and weaker expression seen in brain, heart and testis. In the brain, expressed in ependymal cells lining the brain ventricles and the aqueduct.

It is found in the cytoplasm. The protein resides in the cytoskeleton. Its subcellular location is the cilium axoneme. Functionally, force generating protein of respiratory cilia. Produces force towards the minus ends of microtubules. Dynein has ATPase activity; the force-producing power stroke is thought to occur on release of ADP. Required for structural and functional integrity of the cilia of ependymal cells lining the brain ventricles. The polypeptide is Dynein axonemal heavy chain 5 (Mus musculus (Mouse)).